The primary structure comprises 409 residues: Elongation factor Tu (409 aa).

The region spanning 10–214 (KPHANIGTIG…EVDAYIPTPE (205 aa)) is the tr-type G domain. A G1 region spans residues 19–26 (GHVDHGKT). 19 to 26 (GHVDHGKT) lines the GTP pocket. A Mg(2+)-binding site is contributed by Thr26. The segment at 60–64 (GITIN) is G2. The interval 81-84 (DCPG) is G3. GTP is bound by residues 81–85 (DCPGH) and 136–139 (NKED). The G4 stretch occupies residues 136-139 (NKED). The segment at 174-176 (SAL) is G5.

Belongs to the TRAFAC class translation factor GTPase superfamily. Classic translation factor GTPase family. EF-Tu/EF-1A subfamily. Monomer.

It localises to the cytoplasm. The enzyme catalyses GTP + H2O = GDP + phosphate + H(+). In terms of biological role, GTP hydrolase that promotes the GTP-dependent binding of aminoacyl-tRNA to the A-site of ribosomes during protein biosynthesis. The chain is Elongation factor Tu from Synechococcus elongatus (strain ATCC 33912 / PCC 7942 / FACHB-805) (Anacystis nidulans R2).